The primary structure comprises 187 residues: Troponin I, slow skeletal muscle (187 aa).

Pro-2 bears the N-acetylproline mark. Residues 2–48 are involved in binding TNC; that stretch reads PEVERKPKITASRKLLLKSLMLAKAKECWEQEHEEREAEKVRYLAER. The residue at position 58 (Ser-58) is a Phosphoserine. The interval 97–118 is involved in binding TNC and actin; sequence LKLKVMDLRGKFKRPPLRRVRV.

Belongs to the troponin I family. As to quaternary structure, binds to actin and tropomyosin. In terms of tissue distribution, highest levels observed in human skeletal muscle (e.g. gastrocnemious muscle), differentiated cultures of primary human muscle cells and rhabdomyosarcoma cells cultured in low serum medium. Expressed in C2 muscle cell myoblasts and myotubes.

Its function is as follows. Troponin I is the inhibitory subunit of troponin, the thin filament regulatory complex which confers calcium-sensitivity to striated muscle actomyosin ATPase activity. This Homo sapiens (Human) protein is Troponin I, slow skeletal muscle (TNNI1).